The sequence spans 73 residues: Conotoxin Im14.3 (73 aa).

Positions 1-17 (MGVFRCCLAAALVVVCL) are cleaved as a signal peptide. Positions 18–35 (SRMGGTEPLESNHEDERR) are excised as a propeptide. Positions 22 to 42 (GTEPLESNHEDERRADDTSGD) are disordered. Over residues 27 to 38 (ESNHEDERRADD) the composition is skewed to basic and acidic residues. Residues 44 to 73 (CVDTNEDCVNWASTGQCEANPSYMRENCRK) enclose the ShKT domain.

Post-translationally, contain 2 disulfide bonds. In terms of tissue distribution, expressed by the venom duct.

The protein localises to the secreted. Functionally, probable neurotoxin. This Conus imperialis (Imperial cone) protein is Conotoxin Im14.3.